A 254-amino-acid chain; its full sequence is Probable protein S-acyltransferase 15 (254 aa).

The next 2 helical transmembrane spans lie at 1-21 (MGFVYYVTLFVFIDDWVGLQS) and 28-48 (ALLFSLLASLCLFSLSICVLV). The DHHC domain occupies 75-125 (RKCDKCFAYKPLRTHHCRVCRRCVLKMDHHCLWINNCVGYANYKAFFILVF). Cys-105 serves as the catalytic S-palmitoyl cysteine intermediate. 2 helical membrane passes run 119–139 (AFFILVFYATVASIYSTVLLV) and 164–184 (IFMIGLSITLGTLLCWHIYLI).

It belongs to the DHHC palmitoyltransferase family.

The protein resides in the endoplasmic reticulum membrane. It is found in the cytoplasmic vesicle membrane. The catalysed reaction is L-cysteinyl-[protein] + hexadecanoyl-CoA = S-hexadecanoyl-L-cysteinyl-[protein] + CoA. Palmitoyl acyltransferase. The sequence is that of Probable protein S-acyltransferase 15 (PAT15) from Arabidopsis thaliana (Mouse-ear cress).